The sequence spans 179 residues: Transcription factor 21 (179 aa).

The segment at 20-87 is disordered; the sequence is CDGLKMDSNK…QVQRNAANAR (68 aa). Residues 33-46 are compositionally biased toward low complexity; sequence TSNESTEESSNCEN. Residues 70–80 show a composition bias toward polar residues; it reads SGVSQEGKQVQ. Positions 79-131 constitute a bHLH domain; it reads VQRNAANARERARMRVLSKAFSRLKTTLPWVPPDTKLSKLDTLRLASSYIAHL.

In terms of assembly, efficient DNA binding requires dimerization with another bHLH protein. Forms a heterodimer with TCF3 and binds the E box (5'-CANNTG-3').

It is found in the nucleus. Involved in epithelial-mesenchymal interactions in kidney and lung morphogenesis that include epithelial differentiation and branching morphogenesis. May play a role in the specification or differentiation of one or more subsets of epicardial cell types. The polypeptide is Transcription factor 21 (TCF21) (Homo sapiens (Human)).